The chain runs to 178 residues: Peptide methionine sulfoxide reductase MsrA (178 aa).

Cysteine 11 is a catalytic residue.

This sequence belongs to the MsrA Met sulfoxide reductase family.

It catalyses the reaction L-methionyl-[protein] + [thioredoxin]-disulfide + H2O = L-methionyl-(S)-S-oxide-[protein] + [thioredoxin]-dithiol. The enzyme catalyses [thioredoxin]-disulfide + L-methionine + H2O = L-methionine (S)-S-oxide + [thioredoxin]-dithiol. Functionally, has an important function as a repair enzyme for proteins that have been inactivated by oxidation. Catalyzes the reversible oxidation-reduction of methionine sulfoxide in proteins to methionine. The protein is Peptide methionine sulfoxide reductase MsrA of Natronomonas pharaonis (strain ATCC 35678 / DSM 2160 / CIP 103997 / JCM 8858 / NBRC 14720 / NCIMB 2260 / Gabara) (Halobacterium pharaonis).